Here is a 475-residue protein sequence, read N- to C-terminus: ATP synthase subunit beta (475 aa).

161 to 168 (GGAGVGKT) lines the ATP pocket.

The protein belongs to the ATPase alpha/beta chains family. In terms of assembly, F-type ATPases have 2 components, CF(1) - the catalytic core - and CF(0) - the membrane proton channel. CF(1) has five subunits: alpha(3), beta(3), gamma(1), delta(1), epsilon(1). CF(0) has three main subunits: a(1), b(2) and c(9-12). The alpha and beta chains form an alternating ring which encloses part of the gamma chain. CF(1) is attached to CF(0) by a central stalk formed by the gamma and epsilon chains, while a peripheral stalk is formed by the delta and b chains.

It localises to the cell membrane. It carries out the reaction ATP + H2O + 4 H(+)(in) = ADP + phosphate + 5 H(+)(out). In terms of biological role, produces ATP from ADP in the presence of a proton gradient across the membrane. The catalytic sites are hosted primarily by the beta subunits. This is ATP synthase subunit beta from Mycoplasma mycoides subsp. mycoides SC (strain CCUG 32753 / NCTC 10114 / PG1).